The sequence spans 229 residues: Lantibiotic transport ATP-binding protein SrtF (229 aa).

Residues 2 to 225 form the ABC transporter domain; sequence LKIQNLKKSY…EELFNNQILF (224 aa). ATP is bound at residue 34–41; sequence GPNGAGKS.

This sequence belongs to the ABC transporter superfamily.

Implicated in the export process of the lantibiotic SrtA. The protein is Lantibiotic transport ATP-binding protein SrtF (srtF) of Streptococcus pyogenes serotype M1.